We begin with the raw amino-acid sequence, 147 residues long: D-aminoacyl-tRNA deacylase (147 aa).

The Gly-cisPro motif, important for rejection of L-amino acids signature appears at 136–137 (GP).

Belongs to the DTD family. In terms of assembly, homodimer.

The protein localises to the cytoplasm. The enzyme catalyses glycyl-tRNA(Ala) + H2O = tRNA(Ala) + glycine + H(+). It catalyses the reaction a D-aminoacyl-tRNA + H2O = a tRNA + a D-alpha-amino acid + H(+). In terms of biological role, an aminoacyl-tRNA editing enzyme that deacylates mischarged D-aminoacyl-tRNAs. Also deacylates mischarged glycyl-tRNA(Ala), protecting cells against glycine mischarging by AlaRS. Acts via tRNA-based rather than protein-based catalysis; rejects L-amino acids rather than detecting D-amino acids in the active site. By recycling D-aminoacyl-tRNA to D-amino acids and free tRNA molecules, this enzyme counteracts the toxicity associated with the formation of D-aminoacyl-tRNA entities in vivo and helps enforce protein L-homochirality. In Streptococcus suis (strain 98HAH33), this protein is D-aminoacyl-tRNA deacylase.